Reading from the N-terminus, the 464-residue chain is Arylsulfatase (464 aa).

The N-terminal stretch at 1-20 is a signal peptide; that stretch reads MNKKAMAAAVSMILAGGAHA. Ca(2+)-binding residues include Asp34, Asp35, and Ser72. Ser72 (nucleophile) is an active-site residue. A 3-oxoalanine (Ser) modification is found at Ser72. His134 is an active-site residue. Positions 329 and 330 each coordinate Ca(2+).

The protein belongs to the sulfatase family. The cofactor is Ca(2+). In terms of processing, the conversion to 3-oxoalanine (also known as C-formylglycine, FGly), of a serine or cysteine residue in prokaryotes and of a cysteine residue in eukaryotes, is critical for catalytic activity.

The protein localises to the periplasm. The catalysed reaction is an aryl sulfate + H2O = a phenol + sulfate + H(+). Its function is as follows. Plays an important role in the mineralization of sulfates. In Klebsiella aerogenes (Enterobacter aerogenes), this protein is Arylsulfatase (atsA).